The sequence spans 100 residues: Integration host factor subunit alpha (100 aa).

This sequence belongs to the bacterial histone-like protein family. Heterodimer of an alpha and a beta chain.

Its function is as follows. This protein is one of the two subunits of integration host factor, a specific DNA-binding protein that functions in genetic recombination as well as in transcriptional and translational control. This Cereibacter sphaeroides (strain ATCC 17023 / DSM 158 / JCM 6121 / CCUG 31486 / LMG 2827 / NBRC 12203 / NCIMB 8253 / ATH 2.4.1.) (Rhodobacter sphaeroides) protein is Integration host factor subunit alpha.